Reading from the N-terminus, the 198-residue chain is Heat shock 70 kDa protein (198 aa).

Over residues 170-191 the composition is skewed to gly residues; the sequence is GGGVPSGMPGGMPGAGGGGGKG. The disordered stretch occupies residues 170–198; it reads GGGVPSGMPGGMPGAGGGGGKGPTIEEVD.

This sequence belongs to the heat shock protein 70 family.

The polypeptide is Heat shock 70 kDa protein (Schistosoma japonicum (Blood fluke)).